Reading from the N-terminus, the 560-residue chain is Serine/threonine-protein kinase TOS3 (560 aa).

The Protein kinase domain maps to 50-344; that stretch reads FEILATLGNG…LADIKVHPFM (295 aa). ATP contacts are provided by residues 56-64 and Lys-79; that span reads LGNGQYGKV. Asp-189 acts as the Proton acceptor in catalysis.

It belongs to the protein kinase superfamily. Ser/Thr protein kinase family. Post-translationally, autophosphorylated.

It catalyses the reaction L-seryl-[protein] + ATP = O-phospho-L-seryl-[protein] + ADP + H(+). It carries out the reaction L-threonyl-[protein] + ATP = O-phospho-L-threonyl-[protein] + ADP + H(+). Its function is as follows. One of the three SNF1 protein kinases (with SAK1 and ELM1) which are required for growth on nonfermentable carbon sources and nonpreferred sugars and for response to environmental stress. Activates SNF1 by phosphorylation of its activation-loop 'Thr-210'. Required for the regulation by SNF1 of the transcription of a large set of genes, the modification the activity of metabolic enzymes, and the control of various nutrient-responsive cellular developmental processes. Also phosphorylates GAL83, MIG1 and SIP2. The chain is Serine/threonine-protein kinase TOS3 (TOS3) from Saccharomyces cerevisiae (strain YJM789) (Baker's yeast).